The sequence spans 501 residues: Lysine--tRNA ligase (501 aa).

Mg(2+) contacts are provided by Glu402 and Glu409.

It belongs to the class-II aminoacyl-tRNA synthetase family. As to quaternary structure, homodimer. The cofactor is Mg(2+).

The protein localises to the cytoplasm. The catalysed reaction is tRNA(Lys) + L-lysine + ATP = L-lysyl-tRNA(Lys) + AMP + diphosphate. The protein is Lysine--tRNA ligase (lysS) of Helicobacter pylori (strain ATCC 700392 / 26695) (Campylobacter pylori).